We begin with the raw amino-acid sequence, 103 residues long: Large ribosomal subunit protein P2 (103 aa).

Residues 64–103 (LAISSSQKSEPAQPADTAESTQATENKEEEDEDFDIFAAF) are disordered. The span at 90 to 103 (KEEEDEDFDIFAAF) shows a compositional bias: acidic residues.

The protein belongs to the eukaryotic ribosomal protein P1/P2 family. As to quaternary structure, component of the large ribosomal subunit.

Its subcellular location is the cytoplasm. In terms of biological role, plays an important role in the elongation step of protein synthesis. This is Large ribosomal subunit protein P2 (RPP2A) from Encephalitozoon cuniculi (strain GB-M1) (Microsporidian parasite).